The sequence spans 259 residues: uncharacterized protein (259 aa).

The 123-residue stretch at 51–173 folds into the HD domain; it reads GKTHAKIVAN…IAVADGTDMT (123 aa).

This is an uncharacterized protein from Methanocaldococcus jannaschii (strain ATCC 43067 / DSM 2661 / JAL-1 / JCM 10045 / NBRC 100440) (Methanococcus jannaschii).